A 212-amino-acid polypeptide reads, in one-letter code: Ras-related protein RABC1 (212 aa).

N-acetylglycine is present on glycine 2. Glycine 20 to serine 27 serves as a coordination point for GTP. An Effector region motif is present at residues leucine 41–phenylalanine 49. GTP is bound by residues aspartate 67 to glutamine 71, asparagine 127 to aspartate 130, and serine 157 to alanine 158. The disordered stretch occupies residues threonine 182–serine 212. The segment covering threonine 201–serine 212 has biased composition (low complexity). S-geranylgeranyl cysteine attachment occurs at residues cysteine 209 and cysteine 210.

Belongs to the small GTPase superfamily. Rab family.

The protein resides in the cell membrane. In terms of biological role, intracellular vesicle trafficking and protein transport. The sequence is that of Ras-related protein RABC1 (RABC1) from Arabidopsis thaliana (Mouse-ear cress).